The sequence spans 416 residues: Exodeoxyribonuclease 7 large subunit (416 aa).

Belongs to the XseA family. As to quaternary structure, heterooligomer composed of large and small subunits.

It is found in the cytoplasm. The enzyme catalyses Exonucleolytic cleavage in either 5'- to 3'- or 3'- to 5'-direction to yield nucleoside 5'-phosphates.. Functionally, bidirectionally degrades single-stranded DNA into large acid-insoluble oligonucleotides, which are then degraded further into small acid-soluble oligonucleotides. The protein is Exodeoxyribonuclease 7 large subunit of Nitratiruptor sp. (strain SB155-2).